The primary structure comprises 335 residues: HTH-type transcriptional regulator LacR (335 aa).

The region spanning 1-58 (MRTIKEIALESGYSPATVSRLLNNDPNLSITADTKNKILEIANKLGYWEDHQEKKIKP) is the HTH lacI-type domain. The segment at residues 4 to 23 (IKEIALESGYSPATVSRLLN) is a DNA-binding region (H-T-H motif).

Its pathway is carbohydrate metabolism; lactose degradation [regulation]. Negatively regulates the transcription of the lactose utilization genes lacL and lacM. The sequence is that of HTH-type transcriptional regulator LacR (lacR) from Lactobacillus helveticus (Lactobacillus suntoryeus).